A 344-amino-acid polypeptide reads, in one-letter code: 4-hydroxy-2-oxovalerate aldolase (344 aa).

Residues 8 to 260 form the Pyruvate carboxyltransferase domain; the sequence is VTLHDMSLRD…NHGIDLYKIM (253 aa). A substrate-binding site is contributed by 16 to 17; that stretch reads RD. Aspartate 17 contributes to the Mn(2+) binding site. Residue histidine 20 is the Proton acceptor of the active site. The substrate site is built by serine 170 and histidine 199. Mn(2+) is bound by residues histidine 199 and histidine 201. Substrate is bound at residue tyrosine 290.

Belongs to the 4-hydroxy-2-oxovalerate aldolase family.

It carries out the reaction (S)-4-hydroxy-2-oxopentanoate = acetaldehyde + pyruvate. The sequence is that of 4-hydroxy-2-oxovalerate aldolase (mhpE) from Pseudoalteromonas translucida (strain TAC 125).